Reading from the N-terminus, the 389-residue chain is Phospho-N-acetylmuramoyl-pentapeptide-transferase (389 aa).

10 consecutive transmembrane segments (helical) span residues 25-45 (RAVM…PWVI), 73-93 (TMGG…WADL), 97-117 (FIWI…VDDY), 134-154 (FFWQ…SVSE), 190-210 (VSYP…IVGS), 222-242 (GLVI…AYVM), 258-278 (GAGE…AFLW), 286-306 (VFMG…IAVI), 311-331 (IVLF…MLQV), and 366-386 (QVVV…LSSL).

This sequence belongs to the glycosyltransferase 4 family. MraY subfamily. Requires Mg(2+) as cofactor.

It is found in the cell inner membrane. It carries out the reaction UDP-N-acetyl-alpha-D-muramoyl-L-alanyl-gamma-D-glutamyl-meso-2,6-diaminopimeloyl-D-alanyl-D-alanine + di-trans,octa-cis-undecaprenyl phosphate = di-trans,octa-cis-undecaprenyl diphospho-N-acetyl-alpha-D-muramoyl-L-alanyl-D-glutamyl-meso-2,6-diaminopimeloyl-D-alanyl-D-alanine + UMP. The protein operates within cell wall biogenesis; peptidoglycan biosynthesis. Its function is as follows. Catalyzes the initial step of the lipid cycle reactions in the biosynthesis of the cell wall peptidoglycan: transfers peptidoglycan precursor phospho-MurNAc-pentapeptide from UDP-MurNAc-pentapeptide onto the lipid carrier undecaprenyl phosphate, yielding undecaprenyl-pyrophosphoryl-MurNAc-pentapeptide, known as lipid I. The polypeptide is Phospho-N-acetylmuramoyl-pentapeptide-transferase (Polynucleobacter necessarius subsp. necessarius (strain STIR1)).